We begin with the raw amino-acid sequence, 444 residues long: N-succinylarginine dihydrolase (444 aa).

Residues 19–28 (SGLSFGNVAS), N110, and 137–138 (HR) contribute to the substrate site. Residue E174 is part of the active site. Residue R214 coordinates substrate. The active site involves H250. Residues D252 and N362 each contribute to the substrate site. C368 serves as the catalytic Nucleophile.

It belongs to the succinylarginine dihydrolase family. Homodimer.

The enzyme catalyses N(2)-succinyl-L-arginine + 2 H2O + 2 H(+) = N(2)-succinyl-L-ornithine + 2 NH4(+) + CO2. It participates in amino-acid degradation; L-arginine degradation via AST pathway; L-glutamate and succinate from L-arginine: step 2/5. Its function is as follows. Catalyzes the hydrolysis of N(2)-succinylarginine into N(2)-succinylornithine, ammonia and CO(2). The protein is N-succinylarginine dihydrolase of Photobacterium profundum (strain SS9).